A 161-amino-acid chain; its full sequence is Bifurcating [FeFe] hydrogenase gamma subunit (161 aa).

Residues cysteine 78, cysteine 83, cysteine 119, and cysteine 123 each contribute to the [2Fe-2S] cluster site.

Belongs to the complex I 24 kDa subunit family. Heterotrimer composed of HydA (alpha subunit), HydB (beta subunit) and HydC (gamma subunit). Near neutral and acidic pH conditions favor oligomerization of the heterotrimeric holoenzyme. [2Fe-2S] cluster serves as cofactor.

Its subcellular location is the cytoplasm. It catalyses the reaction 2 H2 + 2 oxidized [2Fe-2S]-[ferredoxin] + NAD(+) = 2 reduced [2Fe-2S]-[ferredoxin] + NADH + 3 H(+). Catalyzes the oxidation of the physiological electron carriers NADH and reduced ferredoxin, coupled to the production of H(2). Acts as a bifurcating [FeFe] hydrogenase, which uses the exergonic oxidation of reduced ferredoxin to drive the unfavorable oxidation of NADH to produce H(2). The gamma subunit might be the site where reduced ferredoxin is oxidized. The sequence is that of Bifurcating [FeFe] hydrogenase gamma subunit from Thermotoga maritima (strain ATCC 43589 / DSM 3109 / JCM 10099 / NBRC 100826 / MSB8).